Reading from the N-terminus, the 407-residue chain is Argininosuccinate synthase (407 aa).

ATP-binding positions include Ala12–Ser20 and Ala39. Residues Tyr92 and Ser97 each coordinate L-citrulline. Gly122 is a binding site for ATP. Positions 124, 128, and 129 each coordinate L-aspartate. Asn128 is an L-citrulline binding site. L-citrulline-binding residues include Arg132, Ser182, Ser191, Glu267, and Tyr279.

Belongs to the argininosuccinate synthase family. Type 1 subfamily. Homotetramer.

It is found in the cytoplasm. It carries out the reaction L-citrulline + L-aspartate + ATP = 2-(N(omega)-L-arginino)succinate + AMP + diphosphate + H(+). The protein operates within amino-acid biosynthesis; L-arginine biosynthesis; L-arginine from L-ornithine and carbamoyl phosphate: step 2/3. This Campylobacter fetus subsp. fetus (strain 82-40) protein is Argininosuccinate synthase.